Consider the following 90-residue polypeptide: Small ribosomal subunit protein uS15 (90 aa).

It belongs to the universal ribosomal protein uS15 family. Part of the 30S ribosomal subunit. Forms a bridge to the 50S subunit in the 70S ribosome, contacting the 23S rRNA.

One of the primary rRNA binding proteins, it binds directly to 16S rRNA where it helps nucleate assembly of the platform of the 30S subunit by binding and bridging several RNA helices of the 16S rRNA. Functionally, forms an intersubunit bridge (bridge B4) with the 23S rRNA of the 50S subunit in the ribosome. This is Small ribosomal subunit protein uS15 from Helicobacter pylori (strain Shi470).